A 409-amino-acid chain; its full sequence is Dipeptidase 1 (409 aa).

The first 16 residues, 1–16 (MWTSWWLWPLVAVCAA), serve as a signal peptide directing secretion. Residues His-36 and Asp-38 each contribute to the Zn(2+) site. Asn-57 carries an N-linked (GlcNAc...) asparagine glycan. Cys-87 and Cys-170 are joined by a disulfide. Position 141 (Glu-141) interacts with Zn(2+). A substrate-binding site is contributed by His-168. Zn(2+) is bound by residues His-214 and His-235. Cys-242 and Cys-274 are oxidised to a cystine. Arg-246 is a substrate binding site. Asn-279 carries an N-linked (GlcNAc...) asparagine glycan. Asp-304 contributes to the substrate binding site. Ser-384 carries GPI-anchor amidated serine lipidation. A propeptide spans 385 to 409 (AAPSLHLPPGSLLASLVPLLLLSLP) (removed in mature form).

This sequence belongs to the metallo-dependent hydrolases superfamily. Peptidase M19 family. As to quaternary structure, homodimer; disulfide-linked. It depends on Zn(2+) as a cofactor.

It is found in the apical cell membrane. Its subcellular location is the cell projection. The protein localises to the microvillus membrane. It localises to the cell membrane. It carries out the reaction an L-aminoacyl-L-amino acid + H2O = 2 an L-alpha-amino acid. The enzyme catalyses leukotriene D4 + H2O = leukotriene E4 + glycine. It catalyses the reaction L-cystine-bis-glycine + 2 H2O = L-cystine + 2 glycine. The catalysed reaction is a beta-lactam + H2O = a substituted beta-amino acid. It carries out the reaction glycyldehydrophenylalanine + H2O = 2,3-didehydrophenylalanine + glycine. With respect to regulation, inhibited by L-penicillamine. Inhibited by cilastatin. In terms of biological role, hydrolyzes a wide range of dipeptides. Hydrolyzes the conversion of leukotriene D4 to leukotriene E4. Hydrolyzes cystinyl-bis-glycine (cys-bis-gly) formed during glutathione degradation. Also possesses beta lactamase activity and hydrolytically inactivates beta-lactam antibiotics. Functionally, independently of its dipeptidase activity, acts as an adhesion receptor for neutrophil recruitment from bloodstream into inflamed lungs and liver. The chain is Dipeptidase 1 (DPEP1) from Sus scrofa (Pig).